Here is a 432-residue protein sequence, read N- to C-terminus: Glutamyl-tRNA reductase (432 aa).

Substrate-binding positions include 49–52 (TCNR), Ser101, 106–108 (ESQ), and Gln112. The active-site Nucleophile is the Cys50. 181-186 (GAGETI) provides a ligand contact to NADP(+). The tract at residues 410 to 432 (KPGYHHPTLQTTIVKTDETDPAS) is disordered.

It belongs to the glutamyl-tRNA reductase family. In terms of assembly, homodimer.

The catalysed reaction is (S)-4-amino-5-oxopentanoate + tRNA(Glu) + NADP(+) = L-glutamyl-tRNA(Glu) + NADPH + H(+). Its pathway is porphyrin-containing compound metabolism; protoporphyrin-IX biosynthesis; 5-aminolevulinate from L-glutamyl-tRNA(Glu): step 1/2. In terms of biological role, catalyzes the NADPH-dependent reduction of glutamyl-tRNA(Glu) to glutamate 1-semialdehyde (GSA). The polypeptide is Glutamyl-tRNA reductase (Xylella fastidiosa (strain M23)).